Reading from the N-terminus, the 999-residue chain is MKCLKTLLVSTTLLTAFSLNAEVTLEQQVKITEEGLHFDGRNLDFSNVGTPDTGEKYDYFFGPNISAHGDAVKTYRHYVFMTWYKGGKNERNVMLSRYNTLNGELSTIEFPHKHTGFRGDPLVGESHNTIGLSVSPINGTIHMVFDMHAYDNNNHGGKFKDDFFRYSFSVAGAAELPHSEFTLDKFVKDTSEVSQGDDDYKHLTMTGDLDDKGNFARLTYPKFFTTVDGTLLLYMRLGGNNNGAYVFNRYDAETESWSTFTKFNENNQKLKGNQYNWGLYGNMKYVNGKLRVGFQQRSNDNSDKYKYQNGVYYAYSDHPDGFGDWKNHKGEPMTWPLINSDEIKVFEPGDYISHTEANSVYIVGSFDWTVTEKGDIHIISKVRSTDRGRADYEEVYIHSYKPAGAEEFIISTDFPGASEIYTSGDNVYIVGLEGGRPYVEKAQGGTNNFIRVYEASDGPVFDHGTLYIKDGKVYYYLMERTSGTAMPLYLQIIDLDLESDANAPIVSFPSPSVTVNQGYEKLSLNISAESPVEGRSIQSVSLYIDDELVRTDDSLPFLFGHGSKPHETGALGWLDRHEPNPSPLSAGRHVFKAVAVDSEGDSSTATMILNVNSNAPIVSFPQESLEVDEGFERLSLNISAESAVEGRTIESVSLYIDGGLVRTDTSLPYLFGHASKPHETGAMGWLDTHSPNPSPLAAGSYEFTAVATDNEGEETTASMLLVVKGEPEPPIVTWPNSTVTVYEGYEKLAITIDAETPVEGRDIQSVTLFRNGELVRVDTRPVWNFGHSFAPYEFGAMGWLDRHEPNPSPLGVGTHTFTAVARDSAGLESETDMALIVLSLPGPSVMINEGDISLLTEYQNLAITAEASAADDDISLVSLALYIDEQLIREIYEPPFIWGSDAYSTELLSLTEGTHLVRVVATDSNNKQSESSIFINIDLLGDLNKDSIVDKADTRLFTSKLRAGEIMDIRYDFNGDGVVNNRDTRGLVRRCTYSRCSSN.

Positions 1–21 are cleaved as a signal peptide; that stretch reads MKCLKTLLVSTTLLTAFSLNA. A substrate-binding site is contributed by 126–127; the sequence is SH. The active-site Proton donor/acceptor is the His127. Positions 189, 199, and 201 each coordinate Ca(2+). The substrate site is built by Tyr280 and Arg297. The Ca(2+) site is built by Asp300, Asp303, and Tyr305. Tyr361 is a substrate binding site.

The protein belongs to the polysaccharide lyase 24 family.

Functionally, ulvan lyase involved in ulvan degradation. Ulvan is the main polysaccharide component of the Ulvales (green seaweed) cell wall. It is composed of disaccharide building blocks comprising 3-sulfated rhamnose (Rha3S) linked to D-glucuronic acid (GlcA), L-iduronic acid (IduA), or D-xylose (Xyl). Ulvan lyase catalyzes preferentially the endolytic cleavage of the glycosidic bond between Rha3S and the uronic acid GlcA, but not IduA, producing oligosaccharides that have unsaturated 4-deoxy-L-threo-hex-4-enopyranosiduronic acid (deltaUA) at the non-reducing end. The most abundant end products in the degradation of the ulvan polysaccharide were deltaUA-Rha3S disaccharides and deltaUA-Rha3S-IduA-Rha3S and deltaUA-Rha3S-Xyl-Rha3S tetrasaccharides. The protein is Ulvan lyase, long isoform of Alteromonas sp. (strain LOR).